The sequence spans 363 residues: NADH-quinone oxidoreductase subunit H (363 aa).

9 helical membrane-spanning segments follow: residues 62-82 (GPMYVGMGIFQAFADVFKLLF), 96-116 (FVIAPLLTLAPAFAAWSVVPF), 127-147 (VGLLYLLAMTSLGVYGIILAG), 163-183 (AAQVVSYEIAMGFALVGVMIA), 202-222 (FFDWFLIPLFPLFIVYWVSGV), 238-257 (EIVAGHMVEYSGGAFALFFL), 264-286 (ILVSFLISIFFLGGWLSPIQGWV), 299-319 (KGGWPWLLMKVFFFASAYIWF), and 339-359 (FIPLTIVWIAVTALMVFYGVI).

It belongs to the complex I subunit 1 family. As to quaternary structure, NDH-1 is composed of 14 different subunits. Subunits NuoA, H, J, K, L, M, N constitute the membrane sector of the complex.

Its subcellular location is the cell inner membrane. The catalysed reaction is a quinone + NADH + 5 H(+)(in) = a quinol + NAD(+) + 4 H(+)(out). In terms of biological role, NDH-1 shuttles electrons from NADH, via FMN and iron-sulfur (Fe-S) centers, to quinones in the respiratory chain. The immediate electron acceptor for the enzyme in this species is believed to be ubiquinone. Couples the redox reaction to proton translocation (for every two electrons transferred, four hydrogen ions are translocated across the cytoplasmic membrane), and thus conserves the redox energy in a proton gradient. This subunit may bind ubiquinone. This Xanthomonas axonopodis pv. citri (strain 306) protein is NADH-quinone oxidoreductase subunit H.